A 287-amino-acid chain; its full sequence is Undecaprenyl-diphosphatase (287 aa).

7 helical membrane-spanning segments follow: residues 50 to 70, 97 to 117, 131 to 151, 160 to 180, 206 to 226, 234 to 254, and 264 to 284; these read PGVS…IAYF, LGFA…GIKF, IPSI…AEQV, VVLG…LLPG, FLLG…DALA, LPLL…IDWL, and WLFV…WGVY.

It belongs to the UppP family.

The protein resides in the cell inner membrane. It carries out the reaction di-trans,octa-cis-undecaprenyl diphosphate + H2O = di-trans,octa-cis-undecaprenyl phosphate + phosphate + H(+). Its function is as follows. Catalyzes the dephosphorylation of undecaprenyl diphosphate (UPP). Confers resistance to bacitracin. The chain is Undecaprenyl-diphosphatase from Synechococcus sp. (strain CC9605).